The primary structure comprises 662 residues: Envelope glycoprotein (662 aa).

Residues 1 to 34 (MESPTHPKPSKDKTLSWNLVFLVGILFTIDIGMA) form the signal peptide. Over 35-606 (NPSPHQVYNV…FNKSPWFTTL (572 aa)) the chain is Extracellular. N-linked (GlcNAc...) asparagine; by host glycosylation is found at asparagine 43 and asparagine 58. 2 disulfides stabilise this stretch: cysteine 115–cysteine 132 and cysteine 124–cysteine 137. Residues 245–279 (AMGPNLVLPDQKPPSRQSQIESRVTPHHSQGNGGT) form a disordered region. Residues 258–274 (PSRQSQIESRVTPHHSQ) are compositionally biased toward polar residues. N-linked (GlcNAc...) asparagine; by host glycosylation is found at asparagine 286, asparagine 322, and asparagine 327. Cystine bridges form between cysteine 332/cysteine 335, cysteine 332/cysteine 559, and cysteine 551/cysteine 558. Residues 332 to 335 (CWLC) carry the CXXC motif. N-linked (GlcNAc...) asparagine; by host glycosylation is found at asparagine 351, asparagine 354, asparagine 394, asparagine 410, and asparagine 430. The tract at residues 468–488 (ISLTVALMLGGLTVGGIAAGV) is fusion peptide. 2 coiled-coil regions span residues 496–545 (IETA…ILFL) and 555–591 (KEECCFYADHTGLVRDNMAKLRERLKQRQQLFDSQQG). The immunosuppression stretch occupies residues 534–550 (LQNRRGLDILFLQEGGL). The short motif at 551-559 (CAALKEECC) is the CX6CC element. The chain crosses the membrane as a helical span at residues 607-627 (ISSIMGPLLILLLILLFGPCI). Cysteine 626 is lipidated: S-palmitoyl cysteine; by host. The Cytoplasmic segment spans residues 628-662 (LNRLVQFVKDRISVVQALILTQQYQQIKQYDPDRP).

As to quaternary structure, the mature envelope protein (Env) consists of a trimer of SU-TM heterodimers attached by a labile interchain disulfide bond. Post-translationally, specific enzymatic cleavages in vivo yield mature proteins. Envelope glycoproteins are synthesized as an inactive precursor that is N-glycosylated and processed likely by host cell furin or by a furin-like protease in the Golgi to yield the mature SU and TM proteins. The cleavage site between SU and TM requires the minimal sequence [KR]-X-[KR]-R. The R-peptide is released from the C-terminus of the cytoplasmic tail of the TM protein upon particle formation as a result of proteolytic cleavage by the viral protease. Cleavage of this peptide is required for TM to become fusogenic. The CXXC motif is highly conserved across a broad range of retroviral envelope proteins. It is thought to participate in the formation of a labile disulfide bond possibly with the CX6CC motif present in the transmembrane protein. Isomerization of the intersubunit disulfide bond to an SU intrachain disulfide bond is thought to occur upon receptor recognition in order to allow membrane fusion. In terms of processing, the transmembrane protein is palmitoylated. Post-translationally, the R-peptide is palmitoylated.

The protein resides in the virion membrane. It localises to the host cell membrane. The surface protein (SU) attaches the virus to the host cell by binding to its receptor. This interaction triggers the refolding of the transmembrane protein (TM) and is thought to activate its fusogenic potential by unmasking its fusion peptide. Fusion occurs at the host cell plasma membrane. Functionally, the transmembrane protein (TM) acts as a class I viral fusion protein. Under the current model, the protein has at least 3 conformational states: pre-fusion native state, pre-hairpin intermediate state, and post-fusion hairpin state. During viral and target cell membrane fusion, the coiled coil regions (heptad repeats) assume a trimer-of-hairpins structure, positioning the fusion peptide in close proximity to the C-terminal region of the ectodomain. The formation of this structure appears to drive apposition and subsequent fusion of viral and target cell membranes. Membranes fusion leads to delivery of the nucleocapsid into the cytoplasm. The sequence is that of Envelope glycoprotein (env) from Felidae (cat family).